A 775-amino-acid polypeptide reads, in one-letter code: Coiled-coil domain-containing protein 33 (775 aa).

Disordered stretches follow at residues 1–23 (MGRQ…LDPY) and 68–87 (EANN…PTRA). Residues 7-18 (KVPEEPQDRLDT) are compositionally biased toward basic and acidic residues. Residues 12 to 141 (PQDRLDTSLD…RAFHPYHFEL (130 aa)) form the C2 domain. Residues 71–84 (NHSPQARTSVTSEP) are compositionally biased toward polar residues. Coiled coils occupy residues 414-561 (VEMN…ERKE) and 672-715 (DKFS…LQEQ). Positions 735–775 (RSQGSTTPRQNLKDEGYPGNIERPLQTHLTPGTRDIRHHLR) are disordered.

In Rattus norvegicus (Rat), this protein is Coiled-coil domain-containing protein 33 (Ccdc33).